The chain runs to 103 residues: Large ribosomal subunit protein eL21 (103 aa).

This sequence belongs to the eukaryotic ribosomal protein eL21 family.

This Sulfurisphaera tokodaii (strain DSM 16993 / JCM 10545 / NBRC 100140 / 7) (Sulfolobus tokodaii) protein is Large ribosomal subunit protein eL21.